Consider the following 68-residue polypeptide: UPF0253 protein VF_0662 (68 aa).

The protein belongs to the UPF0253 family.

The chain is UPF0253 protein VF_0662 from Aliivibrio fischeri (strain ATCC 700601 / ES114) (Vibrio fischeri).